Consider the following 80-residue polypeptide: Large ribosomal subunit protein uL24 (80 aa).

Residues 53–80 are disordered; it reads HMRPTQGQTQGSIIEREFPIHSSNVKKS.

This sequence belongs to the universal ribosomal protein uL24 family. In terms of assembly, part of the 50S ribosomal subunit.

Functionally, one of two assembly initiator proteins, it binds directly to the 5'-end of the 23S rRNA, where it nucleates assembly of the 50S subunit. One of the proteins that surrounds the polypeptide exit tunnel on the outside of the subunit. The chain is Large ribosomal subunit protein uL24 from Pelodictyon phaeoclathratiforme (strain DSM 5477 / BU-1).